The sequence spans 280 residues: Putative pyruvate, phosphate dikinase regulatory protein (280 aa).

147 to 154 (GASRSSKT) provides a ligand contact to ADP.

Belongs to the pyruvate, phosphate/water dikinase regulatory protein family. PDRP subfamily.

It catalyses the reaction N(tele)-phospho-L-histidyl/L-threonyl-[pyruvate, phosphate dikinase] + ADP = N(tele)-phospho-L-histidyl/O-phospho-L-threonyl-[pyruvate, phosphate dikinase] + AMP + H(+). The enzyme catalyses N(tele)-phospho-L-histidyl/O-phospho-L-threonyl-[pyruvate, phosphate dikinase] + phosphate + H(+) = N(tele)-phospho-L-histidyl/L-threonyl-[pyruvate, phosphate dikinase] + diphosphate. Bifunctional serine/threonine kinase and phosphorylase involved in the regulation of the pyruvate, phosphate dikinase (PPDK) by catalyzing its phosphorylation/dephosphorylation. The polypeptide is Putative pyruvate, phosphate dikinase regulatory protein (Pelobacter propionicus (strain DSM 2379 / NBRC 103807 / OttBd1)).